A 284-amino-acid chain; its full sequence is Tripartite motif-containing protein 12A (284 aa).

The segment at 15 to 59 (CPVCLNLMVKPVSADCGHTFCQGCITLYFESIKCDKKVFICPVCR) adopts an RING-type zinc-finger fold. Residues 91-132 (QKVFNCARHGKKLQLFCRKDMMAICWLCERSQEHRGHKTALI) form a B box-type zinc finger. Zn(2+) contacts are provided by Cys96, His99, Cys118, and His124. Residues 130 to 234 (ALIEEVAQEY…QSKLLEDFIS (105 aa)) adopt a coiled-coil conformation.

Belongs to the TRIM/RBCC family. In terms of tissue distribution, expressed in embryonic CNS, liver, kidney, olfactory epithelium.

The protein resides in the cytoplasm. The protein is Tripartite motif-containing protein 12A (Trim12a) of Mus musculus (Mouse).